Reading from the N-terminus, the 108-residue chain is Mitochondrial pyruvate carrier 4 (108 aa).

The next 3 membrane-spanning stretches (helical) occupy residues 19–35 (IHFW…IANI), 51–67 (IAVT…SMVI), and 74–90 (LFSV…YQLA).

This sequence belongs to the mitochondrial pyruvate carrier (MPC) (TC 2.A.105) family.

It localises to the mitochondrion inner membrane. Its function is as follows. Mediates the uptake of pyruvate into mitochondria. The protein is Mitochondrial pyruvate carrier 4 of Arabidopsis thaliana (Mouse-ear cress).